Consider the following 396-residue polypeptide: Phospholipase A1-II 4 (396 aa).

Catalysis depends on S221, which acts as the Acyl-ester intermediate. Residues S221, D282, and H319 each act as charge relay system in the active site.

It belongs to the AB hydrolase superfamily. Lipase family.

It is found in the cytoplasm. Its function is as follows. Acylhydrolase that catalyzes the hydrolysis of phospholipids at the sn-1 position. This is Phospholipase A1-II 4 from Oryza sativa subsp. japonica (Rice).